The sequence spans 276 residues: Type III pantothenate kinase (276 aa).

E18–H25 serves as a coordination point for ATP. Substrate-binding positions include Y116 and G120–R123. D122 (proton acceptor) is an active-site residue. Position 142 (D142) interacts with K(+). ATP is bound at residue T145. T200 is a binding site for substrate.

Belongs to the type III pantothenate kinase family. In terms of assembly, homodimer. The cofactor is NH4(+). It depends on K(+) as a cofactor.

The protein localises to the cytoplasm. The catalysed reaction is (R)-pantothenate + ATP = (R)-4'-phosphopantothenate + ADP + H(+). The protein operates within cofactor biosynthesis; coenzyme A biosynthesis; CoA from (R)-pantothenate: step 1/5. Catalyzes the phosphorylation of pantothenate (Pan), the first step in CoA biosynthesis. This chain is Type III pantothenate kinase, found in Nostoc sp. (strain PCC 7120 / SAG 25.82 / UTEX 2576).